Reading from the N-terminus, the 181-residue chain is 3-isopropylmalate dehydratase small subunit (181 aa).

The protein belongs to the LeuD family. LeuD type 2 subfamily. As to quaternary structure, heterodimer of LeuC and LeuD.

The enzyme catalyses (2R,3S)-3-isopropylmalate = (2S)-2-isopropylmalate. Its pathway is amino-acid biosynthesis; L-leucine biosynthesis; L-leucine from 3-methyl-2-oxobutanoate: step 2/4. Catalyzes the isomerization between 2-isopropylmalate and 3-isopropylmalate, via the formation of 2-isopropylmaleate. The sequence is that of 3-isopropylmalate dehydratase small subunit from Deinococcus deserti (strain DSM 17065 / CIP 109153 / LMG 22923 / VCD115).